Here is a 407-residue protein sequence, read N- to C-terminus: Na(+)-translocating NADH-quinone reductase subunit F (407 aa).

The helical transmembrane segment at 3–23 threads the bilayer; the sequence is IILGVVMFTLIVLALVLVILF. The 2Fe-2S ferredoxin-type domain occupies 32 to 126; that stretch reads GDITISVNGD…DMDIELPEEI (95 aa). 4 residues coordinate [2Fe-2S] cluster: cysteine 69, cysteine 75, cysteine 78, and cysteine 110. Residues 129–269 enclose the FAD-binding FR-type domain; it reads VKKWECTVIS…SGPFGEFFAK (141 aa). The segment at 272–389 is catalytic; it reads DAEMVFIGGG…PMMNAAVIGM (118 aa).

This sequence belongs to the NqrF family. In terms of assembly, composed of six subunits; NqrA, NqrB, NqrC, NqrD, NqrE and NqrF. [2Fe-2S] cluster is required as a cofactor. It depends on FAD as a cofactor.

It is found in the cell inner membrane. The enzyme catalyses a ubiquinone + n Na(+)(in) + NADH + H(+) = a ubiquinol + n Na(+)(out) + NAD(+). NQR complex catalyzes the reduction of ubiquinone-1 to ubiquinol by two successive reactions, coupled with the transport of Na(+) ions from the cytoplasm to the periplasm. The first step is catalyzed by NqrF, which accepts electrons from NADH and reduces ubiquinone-1 to ubisemiquinone by a one-electron transfer pathway. In Vibrio parahaemolyticus serotype O3:K6 (strain RIMD 2210633), this protein is Na(+)-translocating NADH-quinone reductase subunit F.